Consider the following 153-residue polypeptide: Ribosome maturation factor RimP (153 aa).

The protein belongs to the RimP family.

Its subcellular location is the cytoplasm. Functionally, required for maturation of 30S ribosomal subunits. The chain is Ribosome maturation factor RimP from Burkholderia pseudomallei (strain 1710b).